The chain runs to 212 residues: MQLFHLCLIIFCSCPTVQASKLCLGWLWGMDIDPYKEFGASVELLSFLPSDFFPSVRDLLDTASALYRDALESPEHCTPNHTALRQAILCWGELMTLASWVGNNLEDPAARDLVVNYVNTNMGLKIRQLLWFHISCLTFGRDTVLEYLVSFGVWIRTPPAYRPPNAPILSTLPETTVVRQRGRAPRRRTPSPRRRRSQSPRRRRSQSPASQC.

Residues 1–19 (MQLFHLCLIIFCSCPTVQA) form the signal peptide. Positions 25–27 (GWL) are HBEAG. A disordered region spans residues 165 to 212 (NAPILSTLPETTVVRQRGRAPRRRTPSPRRRRSQSPRRRRSQSPASQC). Residues 180–205 (QRGRAPRRRTPSPRRRRSQSPRRRRS) show a composition bias toward basic residues. One copy of the 1; half-length repeat lies at 184 to 190 (APRRRTP). Residues 184–206 (APRRRTPSPRRRRSQSPRRRRSQ) form a 3 X 8 AA repeats of S-P-R-R-R-R-S-Q region. A propeptide spanning residues 184 to 212 (APRRRTPSPRRRRSQSPRRRRSQSPASQC) is cleaved from the precursor. 2 consecutive repeat copies span residues 191–198 (SPRRRRSQ) and 199–206 (SPRRRRSQ).

This sequence belongs to the orthohepadnavirus precore antigen family. In terms of assembly, homodimerizes. Phosphorylated. In terms of processing, cleaved by host furin.

The protein localises to the secreted. It localises to the host nucleus. May regulate immune response to the intracellular capsid in acting as a T-cell tolerogen, by having an immunoregulatory effect which prevents destruction of infected cells by cytotoxic T-cells. This immune regulation may predispose to chronicity during perinatal infections and prevent severe liver injury during adult infections. The polypeptide is External core antigen (Hepatitis B virus genotype H subtype adw4 (isolate Nicaragua/2928Nic/1997) (HBV-H)).